A 69-amino-acid chain; its full sequence is Sec-independent protein translocase protein TatA (69 aa).

The helical transmembrane segment at 1–21 (MFGLGGQELILILLIILLLFG) threads the bilayer.

Belongs to the TatA/E family. In terms of assembly, forms a complex with TatC.

It localises to the cell inner membrane. Functionally, part of the twin-arginine translocation (Tat) system that transports large folded proteins containing a characteristic twin-arginine motif in their signal peptide across membranes. TatA could form the protein-conducting channel of the Tat system. The sequence is that of Sec-independent protein translocase protein TatA from Chlorobium phaeovibrioides (strain DSM 265 / 1930) (Prosthecochloris vibrioformis (strain DSM 265)).